Here is a 595-residue protein sequence, read N- to C-terminus: Aspartate--tRNA(Asp/Asn) ligase (595 aa).

L-aspartate is bound at residue Glu174. An aspartate region spans residues 198 to 201; that stretch reads QLFK. Arg220 contributes to the L-aspartate binding site. Residues 220–222 and Gln229 contribute to the ATP site; that span reads RDE. An L-aspartate-binding site is contributed by His456. Glu486 contacts ATP. Arg493 contributes to the L-aspartate binding site. ATP is bound at residue 538–541; that stretch reads GFDR.

The protein belongs to the class-II aminoacyl-tRNA synthetase family. Type 1 subfamily. In terms of assembly, homodimer.

It localises to the cytoplasm. It catalyses the reaction tRNA(Asx) + L-aspartate + ATP = L-aspartyl-tRNA(Asx) + AMP + diphosphate. Functionally, aspartyl-tRNA synthetase with relaxed tRNA specificity since it is able to aspartylate not only its cognate tRNA(Asp) but also tRNA(Asn). Reaction proceeds in two steps: L-aspartate is first activated by ATP to form Asp-AMP and then transferred to the acceptor end of tRNA(Asp/Asn). This Gloeobacter violaceus (strain ATCC 29082 / PCC 7421) protein is Aspartate--tRNA(Asp/Asn) ligase.